Consider the following 188-residue polypeptide: E3 ubiquitin-protein ligase RNF183 (188 aa).

Residues 1–157 (MAEQQGREPE…RECFRNPHFR (157 aa)) lie on the Cytoplasmic side of the membrane. The RING-type zinc-finger motif lies at 11–58 (CPVCWNPFNNTFHTPKVLDCCHSFCVECLAHISLVTPTRRRLLCPLCR). The helical; Anchor for type IV membrane protein transmembrane segment at 158 to 178 (IFAYMMAVILCGTVLFIFSIF) threads the bilayer. At 179–188 (CTRRFFWGVG) the chain is on the lumenal side.

In terms of assembly, interacts with FATE1. Interacts with SEC16A. Interacts with BCL2L1. Autoubiquitinated (in vitro).

The protein resides in the endoplasmic reticulum membrane. It localises to the endoplasmic reticulum. It is found in the golgi apparatus. Its subcellular location is the cis-Golgi network membrane. The protein localises to the lysosome. It catalyses the reaction S-ubiquitinyl-[E2 ubiquitin-conjugating enzyme]-L-cysteine + [acceptor protein]-L-lysine = [E2 ubiquitin-conjugating enzyme]-L-cysteine + N(6)-ubiquitinyl-[acceptor protein]-L-lysine.. It participates in protein modification; protein ubiquitination. In terms of biological role, acts as an E3 ubiquitin ligase catalyzing the covalent attachment of ubiquitin moieties onto substrate proteins. Triggers apoptosis in response to prolonged ER stress by mediating the polyubiquitination and subsequent proteasomal degradation of BCL2L1. May collaborate with FATE1 to restrain BIK protein levels thus regulating apoptotic signaling. This is E3 ubiquitin-protein ligase RNF183 (RNF183) from Bos taurus (Bovine).